We begin with the raw amino-acid sequence, 143 residues long: Large ribosomal subunit protein uL13 (143 aa).

This sequence belongs to the universal ribosomal protein uL13 family. In terms of assembly, part of the 50S ribosomal subunit.

Functionally, this protein is one of the early assembly proteins of the 50S ribosomal subunit, although it is not seen to bind rRNA by itself. It is important during the early stages of 50S assembly. This Dehalococcoides mccartyi (strain CBDB1) protein is Large ribosomal subunit protein uL13.